A 495-amino-acid polypeptide reads, in one-letter code: Two-component response regulator-like APRR3 (495 aa).

In terms of domain architecture, Response regulatory spans 65–183; that stretch reads KVLLVENDDS…ELKNLWQHVW (119 aa). Disordered regions lie at residues 188–441 and 465–495; these read SSSG…RWAQ and HSRK…SEDN. The span at 206 to 217 shows a compositional bias: polar residues; it reads PESTQGSENDAS. A compositionally biased stretch (low complexity) spans 231 to 248; the sequence is GLSNQDGGSDNGSGTQSS. The span at 256-265 shows a compositional bias: polar residues; it reads TKSTSPSNQF. Positions 284-293 are enriched in basic and acidic residues; it reads RLKEAEDQKE. Residues 294-304 are compositionally biased toward polar residues; sequence QIGTGSQTGMS. A compositionally biased stretch (basic and acidic residues) spans 307 to 319; it reads KKAEEPGDLEKNA. Positions 335 to 350 are enriched in polar residues; sequence NRSSGNSQVESKAPSS. Positions 349 to 372 form a coiled coil; sequence SSNREDLQSLEQTLKKTREDRDYK. Residues 351 to 378 show a composition bias toward basic and acidic residues; sequence NREDLQSLEQTLKKTREDRDYKVGDRSV. Polar residues-rich tracts occupy residues 380-395 and 420-436; these read RHSN…NGAT and GSSS…SSGS. A CCT domain is found at 442-484; the sequence is REAALMKFRLKRKERCFEKKVRYHSRKKLAEQRPHVKGQFIRK. A compositionally biased stretch (basic and acidic residues) spans 483-495; the sequence is RKRDDHKSGSEDN.

The protein belongs to the ARR-like family. In terms of assembly, interacts with APRR1/TOC1 (via N-terminus). Post-translationally, phosphorylated by WNK1; during the night. Phosphorylation is required for optimal interaction with APRR1/TOC1.

Its subcellular location is the nucleus. Functionally, controls photoperiodic flowering response. Component of the circadian clock. Controls the degradation of APRR1/TOC1 by the SCF(ZTL) complex. Expression of several members of the ARR-like family is controlled by circadian rhythm. The particular coordinated sequential expression of APRR9, APRR7, APRR5, APRR3 and APPR1 result to circadian waves that may be at the basis of the endogenous circadian clock. The chain is Two-component response regulator-like APRR3 (APRR3) from Arabidopsis thaliana (Mouse-ear cress).